A 156-amino-acid chain; its full sequence is SsrA-binding protein (156 aa).

The protein belongs to the SmpB family.

The protein resides in the cytoplasm. Functionally, required for rescue of stalled ribosomes mediated by trans-translation. Binds to transfer-messenger RNA (tmRNA), required for stable association of tmRNA with ribosomes. tmRNA and SmpB together mimic tRNA shape, replacing the anticodon stem-loop with SmpB. tmRNA is encoded by the ssrA gene; the 2 termini fold to resemble tRNA(Ala) and it encodes a 'tag peptide', a short internal open reading frame. During trans-translation Ala-aminoacylated tmRNA acts like a tRNA, entering the A-site of stalled ribosomes, displacing the stalled mRNA. The ribosome then switches to translate the ORF on the tmRNA; the nascent peptide is terminated with the 'tag peptide' encoded by the tmRNA and targeted for degradation. The ribosome is freed to recommence translation, which seems to be the essential function of trans-translation. This is SsrA-binding protein from Lactiplantibacillus plantarum (strain ATCC BAA-793 / NCIMB 8826 / WCFS1) (Lactobacillus plantarum).